Here is a 280-residue protein sequence, read N- to C-terminus: Urease accessory protein UreD (280 aa).

This sequence belongs to the UreD family. As to quaternary structure, ureD, UreF and UreG form a complex that acts as a GTP-hydrolysis-dependent molecular chaperone, activating the urease apoprotein by helping to assemble the nickel containing metallocenter of UreC. The UreE protein probably delivers the nickel.

It is found in the cytoplasm. Required for maturation of urease via the functional incorporation of the urease nickel metallocenter. In Vibrio parahaemolyticus, this protein is Urease accessory protein UreD.